A 383-amino-acid polypeptide reads, in one-letter code: Outer membrane protein Omp-EA (383 aa).

The N-terminal stretch at 1–21 is a signal peptide; the sequence is MKRNILAVLIPALLAAGAANA. The Periplasmic segment spans residues 22 to 30; the sequence is AEIYNKDGN. A beta stranded transmembrane segment spans residues 31–45; sequence KLDLYGKVKAMRYLS. Residues 46-58 are Extracellular-facing; that stretch reads DADSNASNNADKS. The beta stranded transmembrane segment at 59–70 threads the bilayer; sequence YTRIGFKGQTLI. At 71-74 the chain is on the periplasmic side; the sequence is NDQL. A beta stranded membrane pass occupies residues 75 to 86; that stretch reads TGYGQWEYNFSL. Over 87–100 the chain is Extracellular; that stretch reads SNSESSSDAQSGNK. Residues 101–109 form a beta stranded membrane-spanning segment; sequence TRLGFAGLK. The Periplasmic segment spans residues 110-112; that stretch reads LKD. The chain crosses the membrane as a beta stranded span at residues 113–122; that stretch reads YGSVDYGRNY. Over 123-155 the chain is Extracellular; that stretch reads GVIYDVEAFTDMMPEFGATGYTRTDTYMLTRGN. Residues 156–164 traverse the membrane as a beta stranded segment; sequence SMLTWRNSD. The Periplasmic segment spans residues 165-171; the sequence is FFGLVDG. The beta stranded transmembrane segment at 172 to 178 threads the bilayer; that stretch reads LKIALQY. At 179–198 the chain is on the extracellular side; it reads QGKNEGSGTRATNVSNGDGY. The beta stranded transmembrane segment at 199–206 threads the bilayer; it reads GASLSYKI. The Periplasmic portion of the chain corresponds to 207-209; that stretch reads VEG. The chain crosses the membrane as a beta stranded span at residues 210 to 219; sequence LTINGAMSSS. The Extracellular portion of the chain corresponds to 220-243; it reads NRLNANSASSTTSQKMAAYGSGGR. Residues 244–252 form a beta stranded membrane-spanning segment; sequence AEAWATGLK. Residues 253-258 lie on the Periplasmic side of the membrane; the sequence is YDANGV. The chain crosses the membrane as a beta stranded span at residues 259–268; that stretch reads YLAGTYAETR. The Extracellular portion of the chain corresponds to 269-296; that stretch reads NTNPFSGASYTFAGNSTATAVSGYANKV. The beta stranded transmembrane segment at 297-307 threads the bilayer; the sequence is QNTELVAQYQF. The Periplasmic segment spans residues 308–310; that stretch reads DSG. The chain crosses the membrane as a beta stranded span at residues 311-319; that stretch reads LRPSLAYVQ. Residues 320–335 are Extracellular-facing; that stretch reads TKAKDIENGIGDADLS. The chain crosses the membrane as a beta stranded span at residues 336–346; it reads KFVDVAATYYF. Over 347–351 the chain is Periplasmic; that stretch reads NKNMS. The chain crosses the membrane as a beta stranded span at residues 352–361; that stretch reads AFVDYKVNLL. The Extracellular portion of the chain corresponds to 362–372; sequence SDSNKLHLNTD. The beta stranded transmembrane segment at 373-383 threads the bilayer; that stretch reads DIVAVGLVYQF.

It belongs to the Gram-negative porin family. As to quaternary structure, homotrimer.

Its subcellular location is the cell outer membrane. May play an important role in maintaining pathogenicity in plants. This Erwinia amylovora (Fire blight bacteria) protein is Outer membrane protein Omp-EA (omp-EA).